The chain runs to 456 residues: uncharacterized protein (456 aa).

The span at 415–428 shows a compositional bias: low complexity; it reads SNSNGSSSSGNSSS. Positions 415-444 are disordered; that stretch reads SNSNGSSSSGNSSSIYNSHLMNDKKKNNNA.

This is an uncharacterized protein from Saccharomyces cerevisiae (strain ATCC 204508 / S288c) (Baker's yeast).